The chain runs to 485 residues: Ribulose bisphosphate carboxylase large chain (485 aa).

Residues 1–2 (MS) constitute a propeptide that is removed on maturation. Pro3 carries the N-acetylproline modification. Residue Lys14 is modified to N6,N6,N6-trimethyllysine. The substrate site is built by Asn123 and Thr173. Catalysis depends on Lys175, which acts as the Proton acceptor. Substrate is bound at residue Lys177. Mg(2+) is bound by residues Lys201, Asp203, and Glu204. An N6-carboxylysine modification is found at Lys201. The Proton acceptor role is filled by His294. Positions 295, 327, and 379 each coordinate substrate.

It belongs to the RuBisCO large chain family. Type I subfamily. Heterohexadecamer of 8 large chains and 8 small chains; disulfide-linked. The disulfide link is formed within the large subunit homodimers. Mg(2+) serves as cofactor. In terms of processing, the disulfide bond which can form in the large chain dimeric partners within the hexadecamer appears to be associated with oxidative stress and protein turnover.

It is found in the plastid. The protein resides in the chloroplast. The enzyme catalyses 2 (2R)-3-phosphoglycerate + 2 H(+) = D-ribulose 1,5-bisphosphate + CO2 + H2O. It carries out the reaction D-ribulose 1,5-bisphosphate + O2 = 2-phosphoglycolate + (2R)-3-phosphoglycerate + 2 H(+). In terms of biological role, ruBisCO catalyzes two reactions: the carboxylation of D-ribulose 1,5-bisphosphate, the primary event in carbon dioxide fixation, as well as the oxidative fragmentation of the pentose substrate in the photorespiration process. Both reactions occur simultaneously and in competition at the same active site. The sequence is that of Ribulose bisphosphate carboxylase large chain from Flaveria bidentis (Coastal plain yellowtops).